The chain runs to 114 residues: Probable 4-amino-4-deoxy-L-arabinose-phosphoundecaprenol flippase subunit ArnE (114 aa).

A run of 2 helical transmembrane segments spans residues 41–61 (GWLW…LLVL) and 68–88 (VAYP…HFVF). The 70-residue stretch at 43–112 (LWLALFSLGL…VIGGVLLLSR (70 aa)) folds into the EamA domain.

The protein belongs to the ArnE family. In terms of assembly, heterodimer of ArnE and ArnF.

Its subcellular location is the cell inner membrane. The protein operates within bacterial outer membrane biogenesis; lipopolysaccharide biosynthesis. In terms of biological role, translocates 4-amino-4-deoxy-L-arabinose-phosphoundecaprenol (alpha-L-Ara4N-phosphoundecaprenol) from the cytoplasmic to the periplasmic side of the inner membrane. In Pseudomonas fluorescens (strain ATCC BAA-477 / NRRL B-23932 / Pf-5), this protein is Probable 4-amino-4-deoxy-L-arabinose-phosphoundecaprenol flippase subunit ArnE.